Here is an 864-residue protein sequence, read N- to C-terminus: DNA mismatch repair protein MutS (864 aa).

607-614 (GPNMGGKS) serves as a coordination point for ATP.

It belongs to the DNA mismatch repair MutS family.

Its function is as follows. This protein is involved in the repair of mismatches in DNA. It is possible that it carries out the mismatch recognition step. This protein has a weak ATPase activity. The sequence is that of DNA mismatch repair protein MutS from Neisseria gonorrhoeae (strain NCCP11945).